Here is a 503-residue protein sequence, read N- to C-terminus: UDP-N-acetylglucosamine--peptide N-acetylglucosaminyltransferase GtfA subunit (503 aa).

The interval 1–78 (MTIYNINLGI…FTDIKIAPTS (78 aa)) is N-terminus R-fold-1. 16 to 19 (GVEY) serves as a coordination point for UDP. An extended beta-sheet domain region spans residues 79-195 (VTVDDVLAYF…VYHFKDKIFY (117 aa)). Residues 196 to 306 (GKQAFVRAFM…QPKIVTIPVG (111 aa)) form a C-terminus R-fold-1 region. Residue histidine 242 participates in N-acetyl-D-glucosamine binding. Positions 307 to 503 (SIDSLTDSSQ…KKTVEEVLHD (197 aa)) are R-fold-2. Arginine 328 is a binding site for UDP. Residue glutamate 332 coordinates N-acetyl-D-glucosamine. Residues lysine 333, glycine 358, and 384-385 (HA) each bind UDP. N-acetyl-D-glucosamine is bound at residue 404 to 407 (EGFG). 408–412 (LTLME) is a binding site for UDP.

It belongs to the glycosyltransferase group 1 family. Glycosyltransferase 4 subfamily. Monomer. Interacts with stabilizing protein GtfB, probably as a heterotetramer with 2 subunits each of GtfA and GtfB, part of the accessory SecA2/SecY2 protein translocation apparatus.

Its subcellular location is the cytoplasm. The protein localises to the cell membrane. The catalysed reaction is L-seryl-[protein] + UDP-N-acetyl-alpha-D-glucosamine = 3-O-[N-acetyl-alpha-D-glucosaminyl]-L-seryl-[protein] + UDP + H(+). It participates in protein modification; protein glycosylation. Its function is as follows. Required for the polymorphic O-glycosylation of serine-rich repeat protein PsrP. Catalyzes the first step in glycosylation by transferring N-acetylglucosamine from UDP-GlcNAc to serine residues in PsrP. Part of the accessory SecA2/SecY2 system specifically required to export serine-rich repeat cell wall proteins encoded upstream in the same operon. The GtfA-GtfB complex adds GlcNAc from UDP-GlcNAc to PsrP (experimentally characterized with truncated PsrP-SSR1 constructs); this subunit alone has weak N-acetylglucosaminyl transferase activity that is 10-fold stimulated by GtfB. The complex requires at least a 25 residue-long peptide for activity; the in vitro assay has only been seen to glycosylate Ser residues. The alpha linkage was shown in L.reuteri. The protein is UDP-N-acetylglucosamine--peptide N-acetylglucosaminyltransferase GtfA subunit of Streptococcus pneumoniae serotype 4 (strain ATCC BAA-334 / TIGR4).